The chain runs to 347 residues: Probable nitronate monooxygenase (347 aa).

FMN-binding positions include Asn-69, Gln-171, Gly-176, Gly-213, and 232 to 235 (QIGS).

This sequence belongs to the nitronate monooxygenase family. NMO class I subfamily. Requires FMN as cofactor.

The catalysed reaction is 3 propionate 3-nitronate + 3 O2 + H2O = 3 3-oxopropanoate + 2 nitrate + nitrite + H2O2 + 3 H(+). Its function is as follows. Nitronate monooxygenase that uses molecular oxygen to catalyze the oxidative denitrification of alkyl nitronates. Acts on propionate 3-nitronate (P3N), the presumed physiological substrate. Probably functions in the detoxification of P3N, a metabolic poison produced by plants and fungi as a defense mechanism. This chain is Probable nitronate monooxygenase (yrpB), found in Bacillus subtilis (strain 168).